We begin with the raw amino-acid sequence, 900 residues long: Suppressor of activated egl-4 protein 1 (900 aa).

Disordered stretches follow at residues 1–75 (MPPP…HLPT), 340–380 (PVAE…SRKN), and 406–425 (WAST…ESLE). Polar residues predominate over residues 53-75 (ASGQQHRPSIMSGQSHQNNHLPT). Basic and acidic residues-rich tracts occupy residues 358–377 (GDMK…DGPS) and 412–425 (ADEK…ESLE). An ELM2 domain is found at 451-544 (PHINLGKNYQ…AAVEDLLRSD (94 aa)). The 52-residue stretch at 560-611 (NDSVLWTPDEIYQFQDAIYQSEKDFDKVAVELPGKSVKECVQFYYTWKKDCP) folds into the SANT domain. Residues 710-729 (PTAPRAHHTPSASASKKGAQ) are disordered. The C2H2-type zinc finger occupies 736 to 758 (FHCRLCDKCFEKVKSLNAHMKSH).

As to quaternary structure, may be a component of a histone deacetylase complex containing saeg-2, saeg-1 and hda-2. May interact with egl-4. Ubiquitously expressed.

The protein resides in the nucleus. As a likely component of a histone deacetylase complex, together with saeg-2 and hda-2, functions downstream of the cAMP-dependent kinase egl-4 to regulate the expression of genes required for egg-laying and foraging. The chain is Suppressor of activated egl-4 protein 1 from Caenorhabditis elegans.